The chain runs to 264 residues: tRNA pseudouridine synthase A (264 aa).

The Nucleophile role is filled by Asp-51. Residue Tyr-109 coordinates substrate.

It belongs to the tRNA pseudouridine synthase TruA family. Homodimer.

The catalysed reaction is uridine(38/39/40) in tRNA = pseudouridine(38/39/40) in tRNA. Functionally, formation of pseudouridine at positions 38, 39 and 40 in the anticodon stem and loop of transfer RNAs. The chain is tRNA pseudouridine synthase A from Polaromonas naphthalenivorans (strain CJ2).